Reading from the N-terminus, the 182-residue chain is ATP synthase subunit delta (182 aa).

It belongs to the ATPase delta chain family. As to quaternary structure, F-type ATPases have 2 components, F(1) - the catalytic core - and F(0) - the membrane proton channel. F(1) has five subunits: alpha(3), beta(3), gamma(1), delta(1), epsilon(1). F(0) has three main subunits: a(1), b(2) and c(10-14). The alpha and beta chains form an alternating ring which encloses part of the gamma chain. F(1) is attached to F(0) by a central stalk formed by the gamma and epsilon chains, while a peripheral stalk is formed by the delta and b chains.

The protein resides in the cell inner membrane. In terms of biological role, f(1)F(0) ATP synthase produces ATP from ADP in the presence of a proton or sodium gradient. F-type ATPases consist of two structural domains, F(1) containing the extramembraneous catalytic core and F(0) containing the membrane proton channel, linked together by a central stalk and a peripheral stalk. During catalysis, ATP synthesis in the catalytic domain of F(1) is coupled via a rotary mechanism of the central stalk subunits to proton translocation. Its function is as follows. This protein is part of the stalk that links CF(0) to CF(1). It either transmits conformational changes from CF(0) to CF(1) or is implicated in proton conduction. This Myxococcus xanthus (strain DK1622) protein is ATP synthase subunit delta.